The primary structure comprises 330 residues: Aquaporin Lacbi1:307192 (330 aa).

At 1–40 (MSATPIIHLRDVKKRTGVLNAWERVRNKPQVHWAMECFAE) the chain is on the cytoplasmic side. Residues 41–61 (ALGVFFYVYFGLGSTAAWVIG) form a helical membrane-spanning segment. Over 62 to 71 (NILKQSGLSS) the chain is Extracellular. The helical transmembrane segment at 72–92 (VFQIGFAYAFGILFAIGVCAA) threads the bilayer. Residues 93 to 124 (TSGGHFNPCVTIAFTIFRGFPPLKAVRYIVAQ) are Cytoplasmic-facing. Positions 99–101 (NPC) match the NPA 1 motif. The chain crosses the membrane as a helical span at residues 125–145 (ILGAYIASALVYNQWKVLIVE). Residues 146 to 157 (SELLLKQAGVYE) are Extracellular-facing. Residues 158–178 (TTMFTPNGPAGIFALYLLPGA) form a helical membrane-spanning segment. Residues 179 to 183 (QTLPR) lie on the Cytoplasmic side of the membrane. A helical transmembrane segment spans residues 184-204 (AFLNEFVNCFVLALVIWAALD). Over 205 to 207 (PTS) the chain is Extracellular. The chain crosses the membrane as a helical span at residues 208–228 (FMIPPVMAPFIIAAAYAGSIW). Residues 229 to 264 (GYAVPAISLNSARDIGCRLFALTIWGKSAAGGSYSA) lie on the Cytoplasmic side of the membrane. The NPA 2 motif lies at 238–240 (NSA). A helical membrane pass occupies residues 265-285 (ITALVNIPATLLAAVVYELFL). The Extracellular segment spans residues 286–330 (VDSDRVVAGSHLEFMNVAANHRRHRHQAEDDNHGDADDSSQEKPV). A disordered region spans residues 308-330 (RHRHQAEDDNHGDADDSSQEKPV). Positions 312 to 330 (QAEDDNHGDADDSSQEKPV) are enriched in basic and acidic residues.

Belongs to the MIP/aquaporin (TC 1.A.8) family.

It is found in the membrane. Functionally, water channel-like protein that does not show transport of water nor ammonium across membranes. In Laccaria bicolor (strain S238N-H82 / ATCC MYA-4686) (Bicoloured deceiver), this protein is Aquaporin Lacbi1:307192.